The primary structure comprises 1276 residues: Probable ubiquitin carboxyl-terminal hydrolase K02C4.3 (1276 aa).

One can recognise a USP domain in the interval 168–762; that stretch reads TGLYNSGNTC…SAYMLMYVRS (595 aa). The active-site Nucleophile is the Cys-177. The disordered stretch occupies residues 375-402; sequence SMDTEAATSSNLPGNSVENHPNPAAPEV. Residues 380–393 show a composition bias toward polar residues; that stretch reads AATSSNLPGNSVEN. His-707 acts as the Proton acceptor in catalysis.

The protein belongs to the peptidase C19 family.

It catalyses the reaction Thiol-dependent hydrolysis of ester, thioester, amide, peptide and isopeptide bonds formed by the C-terminal Gly of ubiquitin (a 76-residue protein attached to proteins as an intracellular targeting signal).. The polypeptide is Probable ubiquitin carboxyl-terminal hydrolase K02C4.3 (Caenorhabditis elegans).